The chain runs to 349 residues: Anthranilate phosphoribosyltransferase (349 aa).

5-phospho-alpha-D-ribose 1-diphosphate-binding positions include Gly82, 85-86, Thr90, 92-95, 110-118, and Gly122; these read GD, NVST, and KHGNRSVSS. Gly82 provides a ligand contact to anthranilate. A Mg(2+)-binding site is contributed by Ser94. Asn113 contributes to the anthranilate binding site. Arg168 is an anthranilate binding site. The Mg(2+) site is built by Asp232 and Glu233.

The protein belongs to the anthranilate phosphoribosyltransferase family. In terms of assembly, homodimer. Requires Mg(2+) as cofactor.

The enzyme catalyses N-(5-phospho-beta-D-ribosyl)anthranilate + diphosphate = 5-phospho-alpha-D-ribose 1-diphosphate + anthranilate. It functions in the pathway amino-acid biosynthesis; L-tryptophan biosynthesis; L-tryptophan from chorismate: step 2/5. Catalyzes the transfer of the phosphoribosyl group of 5-phosphorylribose-1-pyrophosphate (PRPP) to anthranilate to yield N-(5'-phosphoribosyl)-anthranilate (PRA). The sequence is that of Anthranilate phosphoribosyltransferase from Methanosphaera stadtmanae (strain ATCC 43021 / DSM 3091 / JCM 11832 / MCB-3).